Consider the following 147-residue polypeptide: Thyrotropin subunit beta (147 aa).

Residues 1–20 (MRVVLLASGVLCLLAGQVLS) form the signal peptide. 6 cysteine pairs are disulfide-bonded: Cys22/Cys72, Cys36/Cys87, Cys39/Cys126, Cys47/Cys103, Cys51/Cys105, and Cys108/Cys115. N-linked (GlcNAc...) asparagine glycosylation occurs at Asn43.

The protein belongs to the glycoprotein hormones subunit beta family. Heterodimer of a common alpha chain and a unique beta chain which confers biological specificity to thyrotropin, lutropin, follitropin and gonadotropin.

The protein localises to the secreted. Functionally, indispensable for the control of thyroid structure and metabolism. May play some role in the biological processes of the immature fishes. This chain is Thyrotropin subunit beta (tshb), found in Anguilla japonica (Japanese eel).